A 142-amino-acid polypeptide reads, in one-letter code: Peptide methionine sulfoxide reductase MsrB (142 aa).

In terms of domain architecture, MsrB spans 2–125; the sequence is IKKNKNDLNE…NSAAVQFIPY (124 aa). Cys114 serves as the catalytic Nucleophile.

Belongs to the MsrB Met sulfoxide reductase family.

It carries out the reaction L-methionyl-[protein] + [thioredoxin]-disulfide + H2O = L-methionyl-(R)-S-oxide-[protein] + [thioredoxin]-dithiol. This chain is Peptide methionine sulfoxide reductase MsrB, found in Staphylococcus saprophyticus subsp. saprophyticus (strain ATCC 15305 / DSM 20229 / NCIMB 8711 / NCTC 7292 / S-41).